A 179-amino-acid polypeptide reads, in one-letter code: Lebocin-3 (179 aa).

An N-terminal signal peptide occupies residues 1–16; the sequence is MYKFLVFSSVLVLFFA. A propeptide spanning residues 17–120 is cleaved from the precursor; sequence QASCQRFIQP…QPIESHRNTR (104 aa). Residue T135 is glycosylated (O-linked (GalNAc...) threonine). The propeptide occupies 153-179; it reads RRHASEDQEELRQYNEHFLIPRDIFQE.

The protein belongs to the lebocin family. Post-translationally, O-glycosylation is important for the antibacterial activity of lebocin. As to expression, hemolymph. Produced in fat body.

It is found in the secreted. Its function is as follows. Antibacterial peptide. This is Lebocin-3 (LEB3) from Bombyx mori (Silk moth).